The primary structure comprises 343 residues: Putative adenosine/adenine deaminase (343 aa).

Histidine 16, histidine 18, and histidine 204 together coordinate Zn(2+). A substrate-binding site is contributed by histidine 18. The active-site Proton donor is the glutamate 207. A Zn(2+)-binding site is contributed by aspartate 285. Aspartate 286 contributes to the substrate binding site.

The protein belongs to the metallo-dependent hydrolases superfamily. Adenosine and AMP deaminases family. Requires Zn(2+) as cofactor.

In terms of biological role, putative nucleoside deaminase. May catalyze the hydrolytic deamination of adenosine or some similar substrate and play a role in purine metabolism. The polypeptide is Putative adenosine/adenine deaminase (Streptomyces coelicolor (strain ATCC BAA-471 / A3(2) / M145)).